We begin with the raw amino-acid sequence, 337 residues long: Inositol 2-dehydrogenase (337 aa).

Belongs to the Gfo/Idh/MocA family. In terms of assembly, homotetramer.

The catalysed reaction is myo-inositol + NAD(+) = scyllo-inosose + NADH + H(+). In terms of biological role, involved in the oxidation of myo-inositol (MI) to 2-keto-myo-inositol (2KMI or 2-inosose). The protein is Inositol 2-dehydrogenase of Klebsiella pneumoniae (strain 342).